The following is a 114-amino-acid chain: Iron-sulfur cluster insertion protein ErpA (114 aa).

Iron-sulfur cluster contacts are provided by C42, C106, and C108.

The protein belongs to the HesB/IscA family. As to quaternary structure, homodimer. Iron-sulfur cluster is required as a cofactor.

Functionally, required for insertion of 4Fe-4S clusters for at least IspG. In Proteus mirabilis (strain HI4320), this protein is Iron-sulfur cluster insertion protein ErpA.